A 454-amino-acid chain; its full sequence is tRNA-2-methylthio-N(6)-dimethylallyladenosine synthase (454 aa).

The MTTase N-terminal domain maps to 6-122; the sequence is RHYHITTFGC…LKDLLESVFD (117 aa). 6 residues coordinate [4Fe-4S] cluster: Cys15, Cys51, Cys85, Cys157, Cys161, and Cys164. In terms of domain architecture, Radical SAM core spans 143 to 381; sequence RDSKVTAWVN…HLGNLKVAER (239 aa). Positions 383-447 constitute a TRAM domain; sequence QRYFGRIEEV…PFSLTGQPVE (65 aa).

This sequence belongs to the methylthiotransferase family. MiaB subfamily. Monomer. The cofactor is [4Fe-4S] cluster.

It localises to the cytoplasm. The enzyme catalyses N(6)-dimethylallyladenosine(37) in tRNA + (sulfur carrier)-SH + AH2 + 2 S-adenosyl-L-methionine = 2-methylsulfanyl-N(6)-dimethylallyladenosine(37) in tRNA + (sulfur carrier)-H + 5'-deoxyadenosine + L-methionine + A + S-adenosyl-L-homocysteine + 2 H(+). Catalyzes the methylthiolation of N6-(dimethylallyl)adenosine (i(6)A), leading to the formation of 2-methylthio-N6-(dimethylallyl)adenosine (ms(2)i(6)A) at position 37 in tRNAs that read codons beginning with uridine. This is tRNA-2-methylthio-N(6)-dimethylallyladenosine synthase from Nostoc punctiforme (strain ATCC 29133 / PCC 73102).